Consider the following 429-residue polypeptide: Enolase (429 aa).

Q162 is a (2R)-2-phosphoglycerate binding site. E204 serves as the catalytic Proton donor. Positions 241, 283, and 310 each coordinate Mg(2+). Positions 335, 364, 365, and 386 each coordinate (2R)-2-phosphoglycerate. K335 acts as the Proton acceptor in catalysis.

Belongs to the enolase family. Requires Mg(2+) as cofactor.

The protein localises to the cytoplasm. It is found in the secreted. The protein resides in the cell surface. It carries out the reaction (2R)-2-phosphoglycerate = phosphoenolpyruvate + H2O. Its pathway is carbohydrate degradation; glycolysis; pyruvate from D-glyceraldehyde 3-phosphate: step 4/5. Functionally, catalyzes the reversible conversion of 2-phosphoglycerate (2-PG) into phosphoenolpyruvate (PEP). It is essential for the degradation of carbohydrates via glycolysis. The protein is Enolase of Mycobacterium sp. (strain JLS).